Reading from the N-terminus, the 355-residue chain is MLQIAIVGGTGYTGVELIRLLSSHPKVNIKWLTSRSEAGKPVASTFPSLRGISELTYSDLGEDTLSALTQCDVVFFATPHGVAMQQAEALVAAGVKVIDLAADFRLQSLQDFEHWYKHKHACPDLLKQAAYGLPEINREAIKSASVIGNPGCYPTTAILGLKPVIEAQNLASDALIEPRIIIDAKSGVSGAGRQAKLSLNYAETTDNFSAYGVAGHRHLPEIEQGVHVLLQSKFTQNIRFVPHLVPMIRGMFSTIHLGLTEAGCQLDLQAIYEQAYKDEPFIDVLPAGEFPDTRSVRASNRLRIAVHQNNSNKEATILVVQDNLVKGAAGQAVQCMNVMFGFEESLGLNHVPVVP.

Cysteine 152 is a catalytic residue.

This sequence belongs to the NAGSA dehydrogenase family. Type 1 subfamily.

It localises to the cytoplasm. The catalysed reaction is N-acetyl-L-glutamate 5-semialdehyde + phosphate + NADP(+) = N-acetyl-L-glutamyl 5-phosphate + NADPH + H(+). The protein operates within amino-acid biosynthesis; L-arginine biosynthesis; N(2)-acetyl-L-ornithine from L-glutamate: step 3/4. Functionally, catalyzes the NADPH-dependent reduction of N-acetyl-5-glutamyl phosphate to yield N-acetyl-L-glutamate 5-semialdehyde. The sequence is that of N-acetyl-gamma-glutamyl-phosphate reductase from Psychrobacter sp. (strain PRwf-1).